The chain runs to 64 residues: MGMRMMFTVFLLVVLATTVVSFTSDRASDGRKAAASDLITLTIKGCCSDPPCIANNPDLCGRRR.

The first 21 residues, 1–21 (MGMRMMFTVFLLVVLATTVVS), serve as a signal peptide directing secretion. Positions 22 to 43 (FTSDRASDGRKAAASDLITLTI) are excised as a propeptide. Cystine bridges form between cysteine 46/cysteine 52 and cysteine 47/cysteine 60. Position 60 is a cysteine amide (cysteine 60).

The protein belongs to the conotoxin A superfamily. In terms of tissue distribution, expressed by the venom duct.

It is found in the secreted. In terms of biological role, may act as a toxin. This Conus victoriae (Queen Victoria cone) protein is Conotoxin Vc1.3.